A 111-amino-acid chain; its full sequence is Large ribosomal subunit protein P2-2 (111 aa).

Residues 86–111 (APAAAAAKKDEPEEEADDDMGFGLFD) are disordered.

The protein belongs to the eukaryotic ribosomal protein P1/P2 family. In terms of assembly, P1 and P2 exist as dimers at the large ribosomal subunit. Post-translationally, phosphorylated.

Plays an important role in the elongation step of protein synthesis. The polypeptide is Large ribosomal subunit protein P2-2 (LIP') (Leishmania infantum).